The primary structure comprises 247 residues: HTH-type transcriptional regulator SarU (247 aa).

DNA-binding regions (H-T-H motif) lie at residues 53–76 (LKEIIGDILYKQSDVVKNIKSLSK) and 178–201 (LKDLFESIRFMYPQIVRSVNRLNN).

The protein belongs to the SarA family.

It localises to the cytoplasm. In terms of biological role, positive regulator of RNAII and RNAIII in a cell density-dependent manner. It can contribute to the expression of virulence genes controlled by agr. May also regulate target genes via an agr-independent pathway. This is HTH-type transcriptional regulator SarU (sarU) from Staphylococcus aureus (strain NCTC 8325 / PS 47).